The chain runs to 396 residues: Elongation factor Tu 2 (396 aa).

In terms of domain architecture, tr-type G spans 10–206 (KPHVNIGTIG…AVDEYIPTPE (197 aa)). The segment at 19–26 (GHVDHGKT) is G1. 19–26 (GHVDHGKT) provides a ligand contact to GTP. Residue T26 participates in Mg(2+) binding. The G2 stretch occupies residues 60–64 (GITIN). The segment at 81 to 84 (DCPG) is G3. Residues 81 to 85 (DCPGH) and 136 to 139 (NKVD) each bind GTP. The tract at residues 136–139 (NKVD) is G4. Residues 174 to 176 (SAL) form a G5 region.

The protein belongs to the TRAFAC class translation factor GTPase superfamily. Classic translation factor GTPase family. EF-Tu/EF-1A subfamily. In terms of assembly, monomer.

It is found in the cytoplasm. The enzyme catalyses GTP + H2O = GDP + phosphate + H(+). Its function is as follows. GTP hydrolase that promotes the GTP-dependent binding of aminoacyl-tRNA to the A-site of ribosomes during protein biosynthesis. This is Elongation factor Tu 2 from Hyphomonas neptunium (strain ATCC 15444).